The following is a 260-amino-acid chain: Hemin import ATP-binding protein HmuV (260 aa).

The ABC transporter domain occupies 6 to 242 (LHADNLHYRA…VQLRACYQAD (237 aa)). 38-45 (GPNGAGKS) serves as a coordination point for ATP.

Belongs to the ABC transporter superfamily. Heme (hemin) importer (TC 3.A.1.14.5) family. As to quaternary structure, the complex is composed of two ATP-binding proteins (HmuV), two transmembrane proteins (HmuU) and a solute-binding protein (HmuT).

The protein resides in the cell inner membrane. Its function is as follows. Part of the ABC transporter complex HmuTUV involved in hemin import. Responsible for energy coupling to the transport system. The polypeptide is Hemin import ATP-binding protein HmuV (Sodalis glossinidius (strain morsitans)).